A 665-amino-acid polypeptide reads, in one-letter code: Prelamin-A/C (665 aa).

N-acetylmethionine is present on Met1. Positions 1 to 25 (METPSQRRATRSGAQASSTPLSPTR) are disordered. Residues 1 to 33 (METPSQRRATRSGAQASSTPLSPTRITRLQEKE) form a head region. Positions 1–130 (METPSQRRAT…TKKEGDLLAA (130 aa)) are interaction with MLIP. Phosphothreonine is present on Thr3. Residue Ser5 is modified to Phosphoserine. Residue Thr10 is modified to Phosphothreonine. Phosphoserine occurs at positions 12 and 18. Thr19 carries the post-translational modification Phosphothreonine. Phosphoserine is present on Ser22. In terms of domain architecture, IF rod spans 31-387 (EKEDLQELND…KLLEGEEERL (357 aa)). Position 32 is an N6-acetyllysine; alternate (Lys32). The residue at position 32 (Lys32) is an N6-succinyllysine; alternate. Lys32 participates in a covalent cross-link: Glycyl lysine isopeptide (Lys-Gly) (interchain with G-Cter in SUMO2); alternate. Residues 34–70 (DLQELNDRLAVYIDRVRSLETENAGLRLRITESEEVV) are coil 1A. Phosphoserine is present on residues Ser51, Ser66, and Ser71. The tract at residues 71–80 (SREVSGIKAA) is linker 1. Lys78 and Lys97 each carry N6-acetyllysine. The coil 1B stretch occupies residues 81-218 (YEAELGDARK…NIYSEELRET (138 aa)). A Glycyl lysine isopeptide (Lys-Gly) (interchain with G-Cter in SUMO2) cross-link involves residue Lys97. Ser107 bears the Phosphoserine mark. N6-acetyllysine is present on residues Lys108, Lys114, Lys123, Lys135, Lys144, and Lys155. Lys171 is subject to N6-acetyllysine; alternate. Lys171 bears the N6-succinyllysine; alternate mark. Lys171 participates in a covalent cross-link: Glycyl lysine isopeptide (Lys-Gly) (interchain with G-Cter in SUMO2); alternate. Lys180, Lys201, and Lys208 each carry N6-acetyllysine. Lys201 participates in a covalent cross-link: Glycyl lysine isopeptide (Lys-Gly) (interchain with G-Cter in SUMO2); alternate. Lys201 is covalently cross-linked (Glycyl lysine isopeptide (Lys-Gly) (interchain with G-Cter in SUMO); alternate). Residue Lys208 forms a Glycyl lysine isopeptide (Lys-Gly) (interchain with G-Cter in SUMO2) linkage. The residue at position 212 (Ser212) is a Phosphoserine. Glycyl lysine isopeptide (Lys-Gly) (interchain with G-Cter in SUMO2) cross-links involve residues Lys219 and Lys233. The tract at residues 219 to 242 (KRRHETRLVEIDNGKQREFESRLA) is linker 2. Lys233, Lys260, Lys265, and Lys270 each carry N6-acetyllysine. The tract at residues 243-383 (DALQELRAQH…HAYRKLLEGE (141 aa)) is coil 2. Lys260 is covalently cross-linked (Glycyl lysine isopeptide (Lys-Gly) (interchain with G-Cter in SUMO2); alternate). Lys270 is covalently cross-linked (Glycyl lysine isopeptide (Lys-Gly) (interchain with G-Cter in SUMO2); alternate). A phosphoserine mark is found at Ser277, Ser282, Ser301, and Ser307. Lys311 is covalently cross-linked (Glycyl lysine isopeptide (Lys-Gly) (interchain with G-Cter in SUMO2); alternate). Residues Lys311, Lys316, and Lys341 each carry the N6-acetyllysine modification. Glycyl lysine isopeptide (Lys-Gly) (interchain with G-Cter in SUMO2) cross-links involve residues Lys366 and Lys378. Positions 384-442 (EERLRLSPSPTSQRSRGRASSHSSQSQGGGSVTKKRKLESSESRSSFSQHARTSGRVAV) are disordered. Positions 384-665 (EERLRLSPSP…SQSSQNCSIM (282 aa)) are tail. Residues Ser390, Ser392, Ser395, Ser398, Ser403, Ser404, Ser406, Ser407, Ser409, and Ser414 each carry the phosphoserine modification. Ser392 carries the phosphoserine; by CDK1 modification. Low complexity predominate over residues 395 to 409 (SQRSRGRASSHSSQS). Thr416 is modified (phosphothreonine). An N6-acetyllysine mark is found at Lys417 and Lys420. Glycyl lysine isopeptide (Lys-Gly) (interchain with G-Cter in SUMO2) cross-links involve residues Lys417 and Lys420. The Nuclear localization signal signature appears at 417-422 (KKRKLE). Phosphoserine is present on residues Ser423, Ser426, Ser429, and Ser431. The region spanning 428–545 (SSFSQHARTS…EEVAMRKLVR (118 aa)) is the LTD domain. A Glycyl lysine isopeptide (Lys-Gly) (interchain with G-Cter in SUMO2); alternate cross-link involves residue Lys450. Lys450 and Lys457 each carry N6-acetyllysine. A phosphoserine mark is found at Ser458, Glu460, and Ser463. Position 486 is an N6-acetyllysine (Lys486). Residue Lys486 forms a Glycyl lysine isopeptide (Lys-Gly) (interchain with G-Cter in SUMO2) linkage. Phosphothreonine is present on Thr496. Ser500 carries the post-translational modification Phosphoserine. Phosphothreonine is present on residues Thr505 and Thr510. Phosphoserine occurs at positions 533 and 546. A Phosphothreonine modification is found at Thr548. The interval 553 to 577 (NEDDDEDGEELLHHHRGSHCSGSGD) is disordered. A phosphoserine mark is found at Ser570, Cys572, and Ser573. Residue Lys599 forms a Glycyl lysine isopeptide (Lys-Gly) (interchain with G-Cter in SUMO2); alternate linkage. Lys599 is covalently cross-linked (Glycyl lysine isopeptide (Lys-Gly) (interchain with G-Cter in SUMO1); alternate). Ser613, Ser614, Ser617, and Ser620 each carry phosphoserine. Ser626 and Ser629 each carry an O-linked (GlcNAc) serine glycan. Residues Ser629, Ser633, Ser637, and Ser653 each carry the phosphoserine modification. Residues 648–662 (LLGNSSPRSQSSQNC) constitute a propeptide, removed in Lamin-A/C form. Cys662 bears the Cysteine methyl ester mark. Cys662 carries S-farnesyl cysteine lipidation. A propeptide spans 663 to 665 (SIM) (removed in Prelamin-A/C form and in Lamin-A/C form).

Belongs to the intermediate filament family. Homodimer of lamin A and lamin C. Lamin dimers then assemble into dimeric head-to-tail polymers. Ultimately, two head-to-tail polymers assemble laterally into a protofilament with a uniformly shaped rod of 3.5 nm in diameter. Interacts with lamin-associated polypeptides IA, IB and TMPO-alpha, RB1 and with emerin. Proteolytically processed isoform A interacts with NARF. Interacts with SREBF1, SREBF2, SUN1, SUN2 and TMEM43. Interacts with TMEM201. Prelamin-A/C interacts with EMD. Interacts with DMPK; may regulate nuclear envelope stability. Interacts with MLIP. Interacts with SUV39H1; the interaction increases stability of SUV39H1. Interacts with ITSN1 isoform 2. Interacts with IFFO1; the interaction forms an interior nucleoskeleton and the recruitment to DNA double-strand breaks. As to quaternary structure, interacts with EMD. In terms of assembly, interacts (via C-terminus) with LEMD2 (via N-terminus) (in vitro). Post-translationally, proteolytic cleavage of the C-terminal of 18 residues of prelamin-A/C results in the production of lamin-A/C. The prelamin-A/C maturation pathway includes farnesylation of CAAX motif by protein farnesyltransferase (FNTA and FNTB), removal of the last three amino acids (-AAX) by RCE1/FACE2 and/or ZMPSTE24, methylation of the C-terminal cysteine by ICMT and endoproteolytic removal of the last 15 C-terminal amino acids by ZMPSTE24. Proteolytic cleavage requires prior farnesylation and methylation, and absence of these blocks cleavage. Farnesylation of prelamin-A/C facilitates nuclear envelope targeting. In terms of processing, phosphorylation plays a key role in lamin organization, subcellular localization and nuclear envelope disintegration. Phosphorylation by CDK1 at Ser-22 and Ser-392 at the onset of mitosis drives lamin disassembly and nuclear envelope breakdown. Phosphorylation at Ser-22 and Ser-392 during interphase promotes localization to the nucleoplasm and regulates lamina assembly. Phosphorylation at Ser-22, Ser-392 and Ser-629 during interphase causes redistribution between the nucleus and the cytoplasm. Phosphorylation at Ser-22 by CDK1 regulates matrix stiffness. Phosphorylation status of Ser-22 determines its localization between double-strand break (DSB) sites and the nuclear matrix. Phosphorylated by ATR at Ser-282 in response to DNA damage, leading to lamin disassembly and nuclear envelope rupture. Phosphorylation also regulates stability in micronuclei arising from genome instability: phosphorylation at Ser-395 by ATR in response to genome instability and double-stranded DNA breaks primes LMNA for subsequent phosphorylation at Ser-392 by CDK1 and micronuclei envelope rupture. The rupture of micronuclear envelope triggers the cGAS-STING pathway thereby activating the type I interferon response and innate immunity. Post-translationally, isoform C is phosphorylated on Ser-392, Ser-407 and Ser-409 at interphase. Acetylation by KAT8 is required for nuclear architecture. In terms of processing, sumoylation is necessary for the localization to the nuclear envelope. Post-translationally, the N-terminus is blocked. As to expression, expressed in liver and in bone marrow (at protein level). Expressed in cardiomyocytes. In terms of tissue distribution, specifically expressed in germ cells.

It is found in the nucleus lamina. Its subcellular location is the nucleus envelope. The protein resides in the nucleus. The protein localises to the nucleoplasm. It localises to the nucleus matrix. Functionally, lamins are intermediate filament proteins that assemble into a filamentous meshwork, and which constitute the major components of the nuclear lamina, a fibrous layer on the nucleoplasmic side of the inner nuclear membrane. Lamins provide a framework for the nuclear envelope, bridging the nuclear envelope and chromatin, thereby playing an important role in nuclear assembly, chromatin organization, nuclear membrane and telomere dynamics. Lamin A and C also regulate matrix stiffness by conferring nuclear mechanical properties. The structural integrity of the lamina is strictly controlled by the cell cycle, as seen by the disintegration and formation of the nuclear envelope in prophase and telophase, respectively. Lamin A and C are present in equal amounts in the lamina of mammals. Also invoved in DNA repair: recruited by DNA repair proteins XRCC4 and IFFO1 to the DNA double-strand breaks (DSBs) to prevent chromosome translocation by immobilizing broken DNA ends. Required for normal development of peripheral nervous system and skeletal muscle and for muscle satellite cell proliferation. Required for osteoblastogenesis and bone formation. Also prevents fat infiltration of muscle and bone marrow, helping to maintain the volume and strength of skeletal muscle and bone. Required for cardiac homeostasis. Prelamin-A/C can accelerate smooth muscle cell senescence. It acts to disrupt mitosis and induce DNA damage in vascular smooth muscle cells (VSMCs), leading to mitotic failure, genomic instability, and premature senescence. Its function is as follows. Isoform C2 may have a role in determining the organization of nuclear and chromosomal structures during spermatogenesis. The sequence is that of Prelamin-A/C (Lmna) from Mus musculus (Mouse).